Consider the following 200-residue polypeptide: Proteasome subunit beta 2 (200 aa).

Residues 1–7 constitute a propeptide, removed in mature form; by autocatalysis; the sequence is METKKTG. Threonine 8 acts as the Nucleophile in catalysis.

The protein belongs to the peptidase T1B family. The 20S proteasome core is composed of 14 alpha and 14 beta subunits that assemble into four stacked heptameric rings, resulting in a barrel-shaped structure. The two inner rings, each composed of seven catalytic beta subunits, are sandwiched by two outer rings, each composed of seven alpha subunits. The catalytic chamber with the active sites is on the inside of the barrel. Has a gated structure, the ends of the cylinder being occluded by the N-termini of the alpha-subunits. Is capped at one or both ends by the proteasome regulatory ATPase, PAN.

The protein resides in the cytoplasm. The enzyme catalyses Cleavage of peptide bonds with very broad specificity.. With respect to regulation, the formation of the proteasomal ATPase PAN-20S proteasome complex, via the docking of the C-termini of PAN into the intersubunit pockets in the alpha-rings, triggers opening of the gate for substrate entry. Interconversion between the open-gate and close-gate conformations leads to a dynamic regulation of the 20S proteasome proteolysis activity. Its function is as follows. Component of the proteasome core, a large protease complex with broad specificity involved in protein degradation. This chain is Proteasome subunit beta 2, found in Thermococcus onnurineus (strain NA1).